A 501-amino-acid chain; its full sequence is Cytoplasmic tRNA 2-thiolation protein 2 (501 aa).

Positions 1 to 12 are enriched in basic and acidic residues; sequence MCEMSEEYRESA. 2 disordered regions span residues 1–23 and 192–214; these read MCEM…RLGT and GVER…PTTA. Position 2 is an N-acetylcysteine (Cys-2). Position 492 is a phosphoserine (Ser-492).

The protein belongs to the CTU2/NCS2 family. In terms of assembly, component of a complex at least composed of URM1, CTU2/NCS2 and CTU1/ATPBD3.

It localises to the cytoplasm. It functions in the pathway tRNA modification; 5-methoxycarbonylmethyl-2-thiouridine-tRNA biosynthesis. Functionally, plays a central role in 2-thiolation of mcm(5)S(2)U at tRNA wobble positions of tRNA(Lys), tRNA(Glu) and tRNA(Gln). May act by forming a heterodimer with CTU1/ATPBD3 that ligates sulfur from thiocarboxylated URM1 onto the uridine of tRNAs at wobble position. The polypeptide is Cytoplasmic tRNA 2-thiolation protein 2 (Bos taurus (Bovine)).